The following is a 1781-amino-acid chain: BCL-6 corepressor-like protein 1 (1781 aa).

Disordered regions lie at residues 64 to 136 and 337 to 362; these read AVGS…SHSR and ASTPPAAPAPPSVPMPTPTPSSGPPS. 2 stretches are compositionally biased toward polar residues: residues 66–82 and 127–136; these read GSGSNARGTNPDGNTTE and PDSTEASHSR. Phosphoserine is present on Ser-490. The span at 521–531 shows a compositional bias: low complexity; that stretch reads SCTSPSSSTNS. Disordered regions lie at residues 521–545, 561–616, 733–777, 869–895, and 933–960; these read SCTSPSSSTNSQPAPDGVPGPLADT, LLPA…EMPL, NRDP…STVK, PLGSSETVHGLPEGQPRPGGPFAPEQD, and QPSSGDMGVNQGSEESESHLCSDSTPKM. Residues 581–594 are compositionally biased toward polar residues; sequence TDQQTEGTSVTFSP. Phosphoserine is present on residues Ser-593 and Ser-607. Lys-741 participates in a covalent cross-link: Glycyl lysine isopeptide (Lys-Gly) (interchain with G-Cter in SUMO2). A Phosphoserine modification is found at Ser-1024. Residue Lys-1087 forms a Glycyl lysine isopeptide (Lys-Gly) (interchain with G-Cter in SUMO2) linkage. Residues 1100-1484 form a disordered region; sequence WQPDEETESL…PTARQIPPEA (385 aa). The segment covering 1116-1127 has biased composition (basic and acidic residues); that stretch reads CNKEKEIEEEPR. Ser-1162 carries the phosphoserine modification. The segment covering 1176–1185 has biased composition (basic residues); the sequence is VRGKHKHRKP. The span at 1195–1213 shows a compositional bias: basic and acidic residues; it reads KRTDGHEEGSLEKKAKNSF. A compositionally biased stretch (polar residues) spans 1222–1234; the sequence is STRTRSQSGSICS. Basic and acidic residues-rich tracts occupy residues 1271–1284 and 1297–1307; these read TQRDTQYRSHHAQD and RAREMPWRTEA. Residues 1314–1324 show a composition bias toward acidic residues; it reads TNEEEEDDEEE. A compositionally biased stretch (basic residues) spans 1328–1339; that stretch reads KRKKRRRQKSRK. Basic and acidic residues predominate over residues 1350-1362; the sequence is EEQRRKGRADSKA. Polar residues-rich tracts occupy residues 1381-1394 and 1437-1449; these read LLLSSKAQGISDSP and RWSQQKTRSSKSP. ANK repeat units follow at residues 1493-1523, 1527-1556, and 1560-1589; these read AGETLLQRAARLGYKDVVLYCLQKHSEDVNH, AGYTALHEACSRGWTDILNILLQHGANVNC, and DGTRPVHDAVVNDNLETIWLLLSYGADPTL. The PCGF Ub-like fold domain (PUFD); required for the interaction with the KDM2B-SKP1 heterodimeric complex stretch occupies residues 1664–1781; that stretch reads DDFMFELSDK…SEVEYQSWSS (118 aa).

It belongs to the BCOR family. In terms of assembly, interacts with PCGF1, forming heterodimers. The PCGF1-BCORL1 heterodimeric complex interacts with the KDM2B-SKP1 heterodimeric complex to form a homotetrameric polycomb repression complex 1 (PRC1.1). Interacts with SKP1. Interacts with CTBP1, HDAC4, HDAC5 and HDAC7. In terms of tissue distribution, highly expressed in lung and testis.

It localises to the nucleus. Its function is as follows. Transcriptional corepressor. May specifically inhibit gene expression when recruited to promoter regions by sequence specific DNA-binding proteins such as BCL6. This repression may be mediated at least in part by histone deacetylase activities which can associate with this corepressor. The sequence is that of BCL-6 corepressor-like protein 1 (Bcorl1) from Mus musculus (Mouse).